The primary structure comprises 670 residues: Zinc finger protein 526 (670 aa).

3 consecutive C2H2-type zinc fingers follow at residues 57–79 (FMCS…QEQH), 108–130 (FQCG…QDAH), and 140–163 (YQCW…KAQH). 2 disordered regions span residues 168-196 (VAEP…KMEP) and 217-304 (GTHF…ATHP). Residues 171-189 (PPVPPPLPPPTPLPPPSPP) show a composition bias toward pro residues. The segment at 197 to 219 (YECPECSTLCATPEEFLEHQGTH) adopts a C2H2-type 4 zinc-finger fold. Positions 217 to 231 (GTHFDSLEKEERNGL) are enriched in basic and acidic residues. The span at 232 to 263 (EEEEEDDEEDEEDDEEMEDEEAMAEVGDDAVG) shows a compositional bias: acidic residues. 9 consecutive C2H2-type zinc fingers follow at residues 305–327 (FHCS…GRAH), 332–354 (HECT…LRLH), 360–382 (YLCV…RRAH), 388–409 (HRCR…RRTH), 442–465 (LPCP…RAVH), 472–494 (HRCG…LRTH), 500–522 (FQCH…QLTH), 528–550 (YQCL…RRLH), and 573–595 (YYCG…QRVH). Residues 409–443 (HAGKSGAPPTGATAPPAPAEPTPPPPPPAPPAQLP) are disordered. Residues 423–442 (PPAPAEPTPPPPPPAPPAQL) are compositionally biased toward pro residues. A disordered region spans residues 601 to 621 (LTLQPPRSPSPAPPPPPEPQQ). Residues 606–619 (PRSPSPAPPPPPEP) show a composition bias toward pro residues.

Belongs to the krueppel C2H2-type zinc-finger protein family. In terms of tissue distribution, widely expressed.

Its subcellular location is the nucleus. Functionally, may be involved in transcriptional regulation. In Homo sapiens (Human), this protein is Zinc finger protein 526 (ZNF526).